The chain runs to 706 residues: K(+)-insensitive pyrophosphate-energized proton pump (706 aa).

5 helical membrane passes run 1–21 (MTAL…AIWA), 62–82 (IVIF…GFAI), 83–103 (GAIL…RANV), 128–148 (GMLV…FLVY), and 164–184 (VALG…GGIF). Lysine 186 serves as a coordination point for substrate. Positions 189, 193, 216, and 219 each coordinate Mg(2+). 6 helical membrane passes run 231 to 251 (LFET…IFFA), 261 to 281 (TLPL…TFFV), 298 to 318 (IATG…LIGF), 328 to 348 (GMSL…IIWI), 376 to 398 (IQGL…AGIL), and 412 to 432 (ATAT…FGPV). Aspartate 434 provides a ligand contact to Mg(2+). Transmembrane regions (helical) follow at residues 465-485 (AVTK…LFAA), 516-536 (YVVV…AMGM), 585-605 (IIPS…IYAI), and 616-636 (AFSA…FVAI). Positions 646, 672, and 676 each coordinate Ca(2+). Lysine 679 is a binding site for substrate. Residues 685 to 705 (AVNPMIKITNIVALLLLAILA) traverse the membrane as a helical segment.

This sequence belongs to the H(+)-translocating pyrophosphatase (TC 3.A.10) family. K(+)-insensitive subfamily. As to quaternary structure, homodimer. It depends on Mg(2+) as a cofactor.

It localises to the cell inner membrane. It carries out the reaction diphosphate + H2O + H(+)(in) = 2 phosphate + 2 H(+)(out). In terms of biological role, proton pump that utilizes the energy of pyrophosphate hydrolysis as the driving force for proton movement across the membrane. Generates a proton motive force. The polypeptide is K(+)-insensitive pyrophosphate-energized proton pump (Bradyrhizobium diazoefficiens (strain JCM 10833 / BCRC 13528 / IAM 13628 / NBRC 14792 / USDA 110)).